Consider the following 514-residue polypeptide: Arabinose import ATP-binding protein AraG (514 aa).

ABC transporter domains follow at residues 16–251 (LRFN…MVGR) and 251–507 (RDIQ…LPRH). An ATP-binding site is contributed by 48–55 (GENGAGKS).

This sequence belongs to the ABC transporter superfamily. Arabinose importer (TC 3.A.1.2.2) family. The complex is composed of two ATP-binding proteins (AraG), two transmembrane proteins (AraH) and a solute-binding protein (AraF).

It is found in the cell inner membrane. It carries out the reaction L-arabinose(out) + ATP + H2O = L-arabinose(in) + ADP + phosphate + H(+). In terms of biological role, part of the ABC transporter complex AraFGH involved in arabinose import. Responsible for energy coupling to the transport system. The polypeptide is Arabinose import ATP-binding protein AraG (Pseudomonas fluorescens (strain Pf0-1)).